The sequence spans 268 residues: Large ribosomal subunit protein bL9m (268 aa).

A mitochondrion-targeting transit peptide spans 1–52; it reads MAAAAFAVPRGVQLRVLTERLLRGGVRELLRPRLSGSTPGSERDFSLSHSRG.

The protein belongs to the bacterial ribosomal protein bL9 family. In terms of assembly, component of the mitochondrial ribosome large subunit (39S) which comprises a 16S rRNA and about 50 distinct proteins.

The protein localises to the mitochondrion. The polypeptide is Large ribosomal subunit protein bL9m (MRPL9) (Bos taurus (Bovine)).